Here is a 149-residue protein sequence, read N- to C-terminus: uncharacterized protein (149 aa).

This is an uncharacterized protein from Acidithiobacillus ferridurans.